The primary structure comprises 245 residues: Large ribosomal subunit protein uL3 (245 aa).

Residue Q152 is modified to N5-methylglutamine. Residues 224-245 form a disordered region; sequence RSKAVQAEAAAPAEAAAPEGDN. Over residues 230 to 245 the composition is skewed to low complexity; that stretch reads AEAAAPAEAAAPEGDN.

This sequence belongs to the universal ribosomal protein uL3 family. In terms of assembly, part of the 50S ribosomal subunit. Forms a cluster with proteins L14 and L19. Post-translationally, methylated by PrmB.

One of the primary rRNA binding proteins, it binds directly near the 3'-end of the 23S rRNA, where it nucleates assembly of the 50S subunit. In Paracoccus denitrificans (strain Pd 1222), this protein is Large ribosomal subunit protein uL3.